Here is a 179-residue protein sequence, read N- to C-terminus: Large ribosomal subunit protein uL5 (179 aa).

Belongs to the universal ribosomal protein uL5 family. Part of the 50S ribosomal subunit; part of the 5S rRNA/L5/L18/L25 subcomplex. Contacts the 5S rRNA and the P site tRNA. Forms a bridge to the 30S subunit in the 70S ribosome.

Functionally, this is one of the proteins that bind and probably mediate the attachment of the 5S RNA into the large ribosomal subunit, where it forms part of the central protuberance. In the 70S ribosome it contacts protein S13 of the 30S subunit (bridge B1b), connecting the 2 subunits; this bridge is implicated in subunit movement. Contacts the P site tRNA; the 5S rRNA and some of its associated proteins might help stabilize positioning of ribosome-bound tRNAs. The polypeptide is Large ribosomal subunit protein uL5 (Francisella philomiragia subsp. philomiragia (strain ATCC 25017 / CCUG 19701 / FSC 153 / O#319-036)).